The sequence spans 184 residues: Ribosome-recycling factor (184 aa).

This sequence belongs to the RRF family.

It is found in the cytoplasm. In terms of biological role, responsible for the release of ribosomes from messenger RNA at the termination of protein biosynthesis. May increase the efficiency of translation by recycling ribosomes from one round of translation to another. In Onion yellows phytoplasma (strain OY-M), this protein is Ribosome-recycling factor.